The chain runs to 620 residues: MAU2 chromatid cohesion factor homolog (620 aa).

TPR repeat units follow at residues 90-123, 445-478, and 485-518; these read FDTASLLAQLYQQQEQSSLAKPVLRKAIELSQHN, GSFYYVQGLNAFHKSSFHEAKRFLRETLKMANAE, and SCSLVLLSHVFLSIGNSKESMNMVTPAMQLASKI.

This sequence belongs to the SCC4/mau-2 family. Component of the cohesin loading complex.

It is found in the nucleus. The protein localises to the nucleoplasm. Functionally, required for association of the cohesin complex with chromatin during interphase. Plays a role in sister chromatid cohesion and normal progression through prometaphase. In Aedes aegypti (Yellowfever mosquito), this protein is MAU2 chromatid cohesion factor homolog.